A 294-amino-acid polypeptide reads, in one-letter code: 33 kDa chaperonin (294 aa).

2 cysteine pairs are disulfide-bonded: Cys238/Cys240 and Cys271/Cys274.

This sequence belongs to the HSP33 family. Under oxidizing conditions two disulfide bonds are formed involving the reactive cysteines. Under reducing conditions zinc is bound to the reactive cysteines and the protein is inactive.

It localises to the cytoplasm. Functionally, redox regulated molecular chaperone. Protects both thermally unfolding and oxidatively damaged proteins from irreversible aggregation. Plays an important role in the bacterial defense system toward oxidative stress. The polypeptide is 33 kDa chaperonin (Staphylococcus carnosus (strain TM300)).